Here is a 477-residue protein sequence, read N- to C-terminus: MQVTETLNEGLKREIKVVVPAGDLEAKLAERLETARGRARINGFRPGKVPTAHLRKMYGKSFMAEIVNEILNDLSRSILAERNEKSATQPEVIMSEDEKEAEKVLDGKADFVFSLNYEVLPAIEVKDFSKIAVTREVVDISDEEVDEQVKRIASSTRTFETKKGKAENEDRVTIDYLGKLDGEPFEGGADNDAQLVLGSGQFIPGFEEQLIGLKAGDEKVITVTFPAEYGAAHLAGKEATFDIKVKEVAKPNELVLDDETAKKLGIESLERLRQVVREQIESQYGQVTRQKVKRQILDALDGDYQFETPQKLVDAEFNNIWQQINFDLQQAGRTFEDEETTEEAAREEYRKLAERRVRLGLVLSEIGEKAGVEVTEEELQRAVYDQVRRYPDQEKEIYDFLRRTPDAVANLRAPIFEEKVVDHLLANINVTDKKVSKEELTAEDEDAASEAKPAKKAAAKKKAAPKKKAEEGKSEEA.

Residues 169 to 254 (EDRVTIDYLG…VKEVAKPNEL (86 aa)) enclose the PPIase FKBP-type domain. Residues 435–477 (VSKEELTAEDEDAASEAKPAKKAAAKKKAAPKKKAEEGKSEEA) form a disordered region. Positions 454–466 (AKKAAAKKKAAPK) are enriched in basic residues. The segment covering 467–477 (KKAEEGKSEEA) has biased composition (basic and acidic residues).

It belongs to the FKBP-type PPIase family. Tig subfamily.

The protein localises to the cytoplasm. It catalyses the reaction [protein]-peptidylproline (omega=180) = [protein]-peptidylproline (omega=0). Its function is as follows. Involved in protein export. Acts as a chaperone by maintaining the newly synthesized protein in an open conformation. Functions as a peptidyl-prolyl cis-trans isomerase. The sequence is that of Trigger factor from Brucella suis biovar 1 (strain 1330).